A 611-amino-acid chain; its full sequence is Protein Pixie (611 aa).

2 4Fe-4S ferredoxin-type domains span residues 15 to 45 (RIAIVSDDKCKPKRCRQECKKTCPVVRMGKL) and 54 to 83 (KIASLSEELCIGCGICVKKCPFEAITIINL). 2 consecutive ABC transporter domains span residues 78–323 (ITII…FLDG) and 350–570 (IKRM…LELL). ATP is bound by residues 118 to 125 (GQNGIGKS) and 387 to 394 (GENGTGKT).

The protein belongs to the ABC transporter superfamily. ABCE family. In terms of assembly, interacts with components of eIF3 complex, namely eIF3a, eIF3j, eIF3b, eIF3c and eIF3i. Associates with the 40S ribosome subunit in an ATP-dependent manner and independently from the presence of the eIF3 complex. Forms a complex with Git and Pak; the interaction with Pak may be mediated by pix/dPIX. Post-translationally, ubiquitinated by Cnot4. Ubiquitination mediates the recruitment of autophagy receptors to the mitochondrial outer membrane and initiates mitophagy. In terms of tissue distribution, expressed in early and late larval imaginal disks (at protein level).

The protein resides in the cytoplasm. Functionally, plays a role in translation initiation and quality control of translation. Together with pelo and HBS1, is required for 48S complex formation from 80S ribosomes and dissociation of vacant 80S ribosomes. Stabilizes core components of eIF3 complex promoting their assembly into translation initiation-competent complexes. Together with pelo and HBS1, recognizes stalled ribosomes and promotes dissociation of elongation complexes assembled on non-stop mRNAs; this triggers endonucleolytic cleavage of the mRNA, a mechanism to release non-functional ribosomes and to degrade damaged mRNAs as part of the No-Go Decay (NGD) pathway. Plays a role in the regulation of mRNA turnover. Plays a role in quality control of translation of mitochondrial outer membrane-localized mRNA. As part of the Pink1-regulated signaling, ubiquitinated by Cnot4 upon mitochondria damage; this modification generates polyubiquitin signals that recruits autophagy receptors to the mitochondrial outer membrane to initiate mitophagy. Required in the wing disk for cell division and growth as well as cell survival. During muscle embryogenesis, required for the recruitment of Pak to muscle attachments in the embryo, hence may play a role in proper muscle morphogenesis and proper guidance and targeting of subsets of myotubes. This Drosophila melanogaster (Fruit fly) protein is Protein Pixie.